The chain runs to 311 residues: Methionyl-tRNA formyltransferase (311 aa).

112-115 (SLLP) contacts (6S)-5,6,7,8-tetrahydrofolate.

Belongs to the Fmt family.

It catalyses the reaction L-methionyl-tRNA(fMet) + (6R)-10-formyltetrahydrofolate = N-formyl-L-methionyl-tRNA(fMet) + (6S)-5,6,7,8-tetrahydrofolate + H(+). In terms of biological role, attaches a formyl group to the free amino group of methionyl-tRNA(fMet). The formyl group appears to play a dual role in the initiator identity of N-formylmethionyl-tRNA by promoting its recognition by IF2 and preventing the misappropriation of this tRNA by the elongation apparatus. This Sinorhizobium medicae (strain WSM419) (Ensifer medicae) protein is Methionyl-tRNA formyltransferase.